The primary structure comprises 535 residues: Beta-glucosidase 47 (535 aa).

A signal peptide spans 1-38; it reads MKKSIVYEIMETKSSMYLSQFRLWLCFIITTLVSLSSS. Residue Gln-73 participates in a beta-D-glucoside binding. Asn-93 is a glycosylation site (N-linked (GlcNAc...) asparagine). A beta-D-glucoside contacts are provided by residues His-175 and 220-221; that span reads NE. Glu-221 functions as the Proton donor in the catalytic mechanism. Cys-240 and Cys-247 form a disulfide bridge. Residue Asn-246 is glycosylated (N-linked (GlcNAc...) asparagine). Tyr-363 contacts a beta-D-glucoside. Cys-371 and Cys-376 are joined by a disulfide. Asn-419 is a glycosylation site (N-linked (GlcNAc...) asparagine). Glu-426 contacts a beta-D-glucoside. Residue Glu-426 is the Nucleophile of the active site. N-linked (GlcNAc...) asparagine glycosylation is present at Asn-432. A beta-D-glucoside contacts are provided by residues Trp-470, 477-478, and Phe-486; that span reads EW.

It belongs to the glycosyl hydrolase 1 family.

It carries out the reaction Hydrolysis of terminal, non-reducing beta-D-glucosyl residues with release of beta-D-glucose.. The chain is Beta-glucosidase 47 from Arabidopsis thaliana (Mouse-ear cress).